Reading from the N-terminus, the 145-residue chain is Trafficking protein particle complex subunit 1 (145 aa).

The protein belongs to the TRAPP small subunits family. BET5 subfamily. In terms of assembly, part of the multisubunit transport protein particle (TRAPP) complex. The heterodimer TRAPPC6B-TRAPPC3 interacts with TRAPPC1 likely providing a core for TRAPP complex formation.

The protein localises to the golgi apparatus. Its subcellular location is the cis-Golgi network. The protein resides in the endoplasmic reticulum. Functionally, may play a role in vesicular transport from endoplasmic reticulum to Golgi. The protein is Trafficking protein particle complex subunit 1 of Mus musculus (Mouse).